A 336-amino-acid polypeptide reads, in one-letter code: Holliday junction branch migration complex subunit RuvB (336 aa).

The tract at residues 4–184 is large ATPase domain (RuvB-L); the sequence is ADRIISAIAK…FGIVQRLEFY (181 aa). Residues isoleucine 23, arginine 24, glycine 65, lysine 68, threonine 69, threonine 70, 131–133, arginine 174, tyrosine 184, and arginine 221 contribute to the ATP site; that span reads EDY. A Mg(2+)-binding site is contributed by threonine 69. The tract at residues 185 to 255 is small ATPAse domain (RuvB-S); it reads SIEDLTSIVM…IAKAALAMLD (71 aa). The tract at residues 258-336 is head domain (RuvB-H); the sequence is QAGFDYLDRK…HFGLAKLADK (79 aa). 3 residues coordinate DNA: arginine 294, arginine 313, and arginine 318.

Belongs to the RuvB family. In terms of assembly, homohexamer. Forms an RuvA(8)-RuvB(12)-Holliday junction (HJ) complex. HJ DNA is sandwiched between 2 RuvA tetramers; dsDNA enters through RuvA and exits via RuvB. An RuvB hexamer assembles on each DNA strand where it exits the tetramer. Each RuvB hexamer is contacted by two RuvA subunits (via domain III) on 2 adjacent RuvB subunits; this complex drives branch migration. In the full resolvosome a probable DNA-RuvA(4)-RuvB(12)-RuvC(2) complex forms which resolves the HJ.

It localises to the cytoplasm. The enzyme catalyses ATP + H2O = ADP + phosphate + H(+). Its function is as follows. The RuvA-RuvB-RuvC complex processes Holliday junction (HJ) DNA during genetic recombination and DNA repair, while the RuvA-RuvB complex plays an important role in the rescue of blocked DNA replication forks via replication fork reversal (RFR). RuvA specifically binds to HJ cruciform DNA, conferring on it an open structure. The RuvB hexamer acts as an ATP-dependent pump, pulling dsDNA into and through the RuvAB complex. RuvB forms 2 homohexamers on either side of HJ DNA bound by 1 or 2 RuvA tetramers; 4 subunits per hexamer contact DNA at a time. Coordinated motions by a converter formed by DNA-disengaged RuvB subunits stimulates ATP hydrolysis and nucleotide exchange. Immobilization of the converter enables RuvB to convert the ATP-contained energy into a lever motion, pulling 2 nucleotides of DNA out of the RuvA tetramer per ATP hydrolyzed, thus driving DNA branch migration. The RuvB motors rotate together with the DNA substrate, which together with the progressing nucleotide cycle form the mechanistic basis for DNA recombination by continuous HJ branch migration. Branch migration allows RuvC to scan DNA until it finds its consensus sequence, where it cleaves and resolves cruciform DNA. This is Holliday junction branch migration complex subunit RuvB from Actinobacillus succinogenes (strain ATCC 55618 / DSM 22257 / CCUG 43843 / 130Z).